The sequence spans 358 residues: Putative zinc metalloprotease BH06270 (358 aa).

Residue His-7 coordinates Zn(2+). Residue Glu-8 is part of the active site. His-11 provides a ligand contact to Zn(2+). Transmembrane regions (helical) follow at residues Ala-89–Phe-111, Phe-282–Ile-304, and Ile-332–Phe-354. In terms of domain architecture, PDZ spans Thr-102–Gln-177.

Belongs to the peptidase M50B family. Zn(2+) is required as a cofactor.

It is found in the cell inner membrane. This is Putative zinc metalloprotease BH06270 from Bartonella henselae (strain ATCC 49882 / DSM 28221 / CCUG 30454 / Houston 1) (Rochalimaea henselae).